We begin with the raw amino-acid sequence, 416 residues long: Squalene synthase (416 aa).

2 consecutive transmembrane segments (helical) span residues 285 to 304 (VINF…NACY) and 386 to 406 (FISY…FLIA).

The protein belongs to the phytoene/squalene synthase family. Mg(2+) is required as a cofactor.

The protein resides in the endoplasmic reticulum membrane. The catalysed reaction is 2 (2E,6E)-farnesyl diphosphate + NADPH + H(+) = squalene + 2 diphosphate + NADP(+). The enzyme catalyses 2 (2E,6E)-farnesyl diphosphate + NADH + H(+) = squalene + 2 diphosphate + NAD(+). Its pathway is terpene metabolism; lanosterol biosynthesis; lanosterol from farnesyl diphosphate: step 1/3. The chain is Squalene synthase (fdfT) from Dictyostelium discoideum (Social amoeba).